The sequence spans 200 residues: Isochorismatase family protein 2A (200 aa).

The protein belongs to the isochorismatase family.

The protein is Isochorismatase family protein 2A of Dictyostelium discoideum (Social amoeba).